Reading from the N-terminus, the 102-residue chain is Late embryogenesis abundant protein D-19 (102 aa).

The segment at 1–102 (MASEQYQAMR…IDESKFRTKN (102 aa)) is disordered. Positions 48–58 (EGRHKGGETRK) are enriched in basic and acidic residues.

Belongs to the small hydrophilic plant seed protein family.

Functionally, LEA proteins are late embryonic proteins abundant in higher plant seed embryos. There are two subsets of LEA proteins (5a and 5b), the first ones are expressed when the cotyledon weight reach 80 mg and the second set are expressed above 100 mg. The function of those proteins is not known. The protein is Late embryogenesis abundant protein D-19 of Gossypium hirsutum (Upland cotton).